A 623-amino-acid polypeptide reads, in one-letter code: UvrABC system protein C (623 aa).

Residues 27-105 (GSPGVYRMLD…IKQLKPRYNV (79 aa)) enclose the GIY-YIG domain. A UVR domain is found at 215-250 (TKVQANLAEQMQAASEAMEFERAAALRDRIKALTQV).

The protein belongs to the UvrC family. As to quaternary structure, interacts with UvrB in an incision complex.

The protein localises to the cytoplasm. In terms of biological role, the UvrABC repair system catalyzes the recognition and processing of DNA lesions. UvrC both incises the 5' and 3' sides of the lesion. The N-terminal half is responsible for the 3' incision and the C-terminal half is responsible for the 5' incision. This is UvrABC system protein C from Cereibacter sphaeroides (strain ATCC 17023 / DSM 158 / JCM 6121 / CCUG 31486 / LMG 2827 / NBRC 12203 / NCIMB 8253 / ATH 2.4.1.) (Rhodobacter sphaeroides).